Reading from the N-terminus, the 129-residue chain is Lysozyme C (129 aa).

One can recognise a C-type lysozyme domain in the interval 1-129 (KVYGRCELAA…VNAWIRGCRL (129 aa)). 4 disulfide bridges follow: Cys-6-Cys-127, Cys-30-Cys-115, Cys-64-Cys-80, and Cys-76-Cys-94. Residues Glu-35 and Asp-52 contribute to the active site.

The protein belongs to the glycosyl hydrolase 22 family. In terms of assembly, monomer.

It localises to the secreted. It carries out the reaction Hydrolysis of (1-&gt;4)-beta-linkages between N-acetylmuramic acid and N-acetyl-D-glucosamine residues in a peptidoglycan and between N-acetyl-D-glucosamine residues in chitodextrins.. Its function is as follows. Lysozymes have primarily a bacteriolytic function; those in tissues and body fluids are associated with the monocyte-macrophage system and enhance the activity of immunoagents. The polypeptide is Lysozyme C (LYZ) (Syrmaticus reevesii (Reeves's pheasant)).